Here is a 111-residue protein sequence, read N- to C-terminus: uncharacterized protein (111 aa).

Belongs to the UPF0440 family.

This is an uncharacterized protein from Pyrococcus furiosus (strain ATCC 43587 / DSM 3638 / JCM 8422 / Vc1).